The primary structure comprises 320 residues: ATP-dependent 6-phosphofructokinase (320 aa).

Gly-12 is a binding site for ATP. ADP contacts are provided by residues 22 to 26 and 55 to 60; these read RSVVR and RYSVSD. Residues 73–74 and 103–106 each bind ATP; these read RF and GDGS. Asp-104 is a Mg(2+) binding site. Substrate is bound at residue 126-128; it reads TID. Asp-128 acts as the Proton acceptor in catalysis. Arg-155 lines the ADP pocket. Residues Arg-163 and 170–172 contribute to the substrate site; that span reads MGR. ADP-binding positions include 186 to 188 and 214 to 216; these read GCE and KKH. Residues Glu-223, Arg-244, and 250 to 253 each bind substrate; that span reads HIQR.

The protein belongs to the phosphofructokinase type A (PFKA) family. ATP-dependent PFK group I subfamily. Prokaryotic clade 'B1' sub-subfamily. Homotetramer. Mg(2+) is required as a cofactor.

The protein localises to the cytoplasm. The enzyme catalyses beta-D-fructose 6-phosphate + ATP = beta-D-fructose 1,6-bisphosphate + ADP + H(+). It participates in carbohydrate degradation; glycolysis; D-glyceraldehyde 3-phosphate and glycerone phosphate from D-glucose: step 3/4. Allosterically activated by ADP and other diphosphonucleosides, and allosterically inhibited by phosphoenolpyruvate. Catalyzes the phosphorylation of D-fructose 6-phosphate to fructose 1,6-bisphosphate by ATP, the first committing step of glycolysis. This chain is ATP-dependent 6-phosphofructokinase, found in Baumannia cicadellinicola subsp. Homalodisca coagulata.